The sequence spans 381 residues: Cytochrome b (381 aa).

4 helical membrane-spanning segments follow: residues 34 to 54, 78 to 99, 114 to 134, and 179 to 199; these read FGSL…FLAM, WLIR…YLHI, WNIG…GYVL, and FFAF…LHFL. Heme b contacts are provided by H84 and H98. Heme b contacts are provided by H183 and H197. A ubiquinone is bound at residue H202. 4 consecutive transmembrane segments (helical) span residues 227-247, 289-309, 321-341, and 348-368; these read YKDI…VLFL, LGGV…PFLH, LTQL…WIGG, and FIFI…IITP.

The protein belongs to the cytochrome b family. As to quaternary structure, the cytochrome bc1 complex contains 3 respiratory subunits (MT-CYB, CYC1 and UQCRFS1), 2 core proteins (UQCRC1 and UQCRC2) and probably 6 low-molecular weight proteins. Requires heme b as cofactor.

The protein localises to the mitochondrion inner membrane. Its function is as follows. Component of the ubiquinol-cytochrome c reductase complex (complex III or cytochrome b-c1 complex) that is part of the mitochondrial respiratory chain. The b-c1 complex mediates electron transfer from ubiquinol to cytochrome c. Contributes to the generation of a proton gradient across the mitochondrial membrane that is then used for ATP synthesis. In Heterodontus francisci (Horn shark), this protein is Cytochrome b (mt-cyb).